We begin with the raw amino-acid sequence, 155 residues long: Endoribonuclease YbeY (155 aa).

3 residues coordinate Zn(2+): histidine 110, histidine 114, and histidine 120.

The protein belongs to the endoribonuclease YbeY family. The cofactor is Zn(2+).

It localises to the cytoplasm. In terms of biological role, single strand-specific metallo-endoribonuclease involved in late-stage 70S ribosome quality control and in maturation of the 3' terminus of the 16S rRNA. The protein is Endoribonuclease YbeY of Deinococcus radiodurans (strain ATCC 13939 / DSM 20539 / JCM 16871 / CCUG 27074 / LMG 4051 / NBRC 15346 / NCIMB 9279 / VKM B-1422 / R1).